Reading from the N-terminus, the 226-residue chain is UPF0758 protein Daro_3142 (226 aa).

The 124-residue stretch at 103 to 226 (SFTSPGKVRD…PLSFAERGLL (124 aa)) folds into the MPN domain. Residues histidine 174, histidine 176, and aspartate 187 each contribute to the Zn(2+) site. The short motif at 174-187 (HNHPSGIAEPSRAD) is the JAMM motif element.

The protein belongs to the UPF0758 family.

This chain is UPF0758 protein Daro_3142, found in Dechloromonas aromatica (strain RCB).